The chain runs to 211 residues: Small ribosomal subunit protein uS3 (211 aa).

In terms of domain architecture, KH type-2 spans 16–85 (IDEYFKTKLV…NPQIEVKQVE (70 aa)).

It belongs to the universal ribosomal protein uS3 family. As to quaternary structure, part of the 30S ribosomal subunit.

In terms of biological role, binds the lower part of the 30S subunit head. In Methanococcus maripaludis (strain DSM 14266 / JCM 13030 / NBRC 101832 / S2 / LL), this protein is Small ribosomal subunit protein uS3.